Reading from the N-terminus, the 349-residue chain is Protein-glutamate methylesterase/protein-glutamine glutaminase 2 (349 aa).

The Response regulatory domain maps to 4 to 121 (SVLVVDDSAL…AEGMQAYAEE (118 aa)). D55 carries the post-translational modification 4-aspartylphosphate. Residues 151-343 (LLSTEKIIAL…AALLQQAARR (193 aa)) form the CheB-type methylesterase domain. Catalysis depends on residues S163, H189, and D285.

It belongs to the CheB family. In terms of assembly, interacts with the C-terminal pentapeptide GWEEF of McpB. Phosphorylated by CheA. Phosphorylation of the N-terminal regulatory domain activates the methylesterase activity.

The protein resides in the cytoplasm. The catalysed reaction is [protein]-L-glutamate 5-O-methyl ester + H2O = L-glutamyl-[protein] + methanol + H(+). The enzyme catalyses L-glutaminyl-[protein] + H2O = L-glutamyl-[protein] + NH4(+). Its function is as follows. Involved in chemotaxis. Part of a chemotaxis signal transduction system that modulates chemotaxis in response to various stimuli. Catalyzes the demethylation of specific methylglutamate residues introduced into the chemoreceptors (methyl-accepting chemotaxis proteins or MCP) by CheR. Also mediates the irreversible deamidation of specific glutamine residues to glutamic acid. Acts on the methyl-accepting chemotaxis protein McpB. May be involved in a specific chemotactic response, which takes place during infection and is required for P.aeruginosa pathogenicity. In Pseudomonas aeruginosa (strain ATCC 15692 / DSM 22644 / CIP 104116 / JCM 14847 / LMG 12228 / 1C / PRS 101 / PAO1), this protein is Protein-glutamate methylesterase/protein-glutamine glutaminase 2.